The following is a 292-amino-acid chain: NAD kinase (292 aa).

D73 functions as the Proton acceptor in the catalytic mechanism. NAD(+)-binding positions include D73–G74, N147–E148, H158, R175, D177, T188–S193, and Q247.

Belongs to the NAD kinase family. It depends on a divalent metal cation as a cofactor.

Its subcellular location is the cytoplasm. The enzyme catalyses NAD(+) + ATP = ADP + NADP(+) + H(+). Functionally, involved in the regulation of the intracellular balance of NAD and NADP, and is a key enzyme in the biosynthesis of NADP. Catalyzes specifically the phosphorylation on 2'-hydroxyl of the adenosine moiety of NAD to yield NADP. This chain is NAD kinase, found in Escherichia coli (strain UTI89 / UPEC).